Reading from the N-terminus, the 209-residue chain is Outer-membrane lipoprotein carrier protein (209 aa).

An N-terminal signal peptide occupies residues 1-23 (MKNLLKKSLLGLAFLSLNGFAFA).

Belongs to the LolA family. Monomer.

Its subcellular location is the periplasm. Functionally, participates in the translocation of lipoproteins from the inner membrane to the outer membrane. Only forms a complex with a lipoprotein if the residue after the N-terminal Cys is not an aspartate (The Asp acts as a targeting signal to indicate that the lipoprotein should stay in the inner membrane). The chain is Outer-membrane lipoprotein carrier protein from Glaesserella parasuis serovar 5 (strain SH0165) (Haemophilus parasuis).